The following is a 537-amino-acid chain: Protein swallow (537 aa).

The segment at 344-406 (QPNAGKPKKN…SESSHPSSND (63 aa)) is disordered. Low complexity-rich tracts occupy residues 371 to 383 (NGNG…HSSS) and 392 to 406 (AAPN…SSND).

In terms of assembly, may be constituted of a homo- or heterodimer.

It localises to the nucleus. Has a role in localizing bicoid mRNA at the anterior margin of the oocyte during oogenesis, and a poorly characterized role in nuclear divisions in early embryogenesis. The chain is Protein swallow (swa) from Drosophila pseudoobscura pseudoobscura (Fruit fly).